Consider the following 95-residue polypeptide: SMAD5 antisense gene protein 1 (95 aa).

Disordered regions lie at residues 1-24 (MHKQ…SSWS) and 43-70 (SSPT…KPAN). Over residues 7–19 (LLPPPATPPPPPQ) the composition is skewed to pro residues.

As to expression, expressed in fetal tissues.

This Homo sapiens (Human) protein is SMAD5 antisense gene protein 1 (SMAD5-AS1).